A 322-amino-acid chain; its full sequence is HPr kinase/phosphorylase (322 aa).

Active-site residues include His142 and Lys163. 157-164 serves as a coordination point for ATP; that stretch reads GASGVGKS. Ser164 is a Mg(2+) binding site. Asp181 functions as the Proton acceptor; for phosphorylation activity. Proton donor; for dephosphorylation activity in the catalytic mechanism. The interval 205-214 is important for the catalytic mechanism of both phosphorylation and dephosphorylation; it reads MEIRGIGIID. Glu206 is a binding site for Mg(2+). The active site involves Arg247. The important for the catalytic mechanism of dephosphorylation stretch occupies residues 268–273; sequence PVKVGR.

The protein belongs to the HPrK/P family. In terms of assembly, homohexamer. Requires Mg(2+) as cofactor.

It carries out the reaction [HPr protein]-L-serine + ATP = [HPr protein]-O-phospho-L-serine + ADP + H(+). The catalysed reaction is [HPr protein]-O-phospho-L-serine + phosphate + H(+) = [HPr protein]-L-serine + diphosphate. Catalyzes the ATP- as well as the pyrophosphate-dependent phosphorylation of a specific serine residue in HPr, a phosphocarrier protein of the phosphoenolpyruvate-dependent sugar phosphotransferase system (PTS). HprK/P also catalyzes the pyrophosphate-producing, inorganic phosphate-dependent dephosphorylation (phosphorolysis) of seryl-phosphorylated HPr (P-Ser-HPr). The two antagonistic activities of HprK/P are regulated by several intracellular metabolites, which change their concentration in response to the absence or presence of rapidly metabolisable carbon sources (glucose, fructose, etc.) in the growth medium. Therefore, by controlling the phosphorylation state of HPr, HPrK/P is a sensor enzyme that plays a major role in the regulation of carbon metabolism and sugar transport: it mediates carbon catabolite repression (CCR), and regulates PTS-catalyzed carbohydrate uptake and inducer exclusion. This chain is HPr kinase/phosphorylase, found in Lactobacillus acidophilus (strain ATCC 700396 / NCK56 / N2 / NCFM).